Reading from the N-terminus, the 293-residue chain is Elongation factor Ts (293 aa).

Residues 79–82 are involved in Mg(2+) ion dislocation from EF-Tu; sequence TDFV.

The protein belongs to the EF-Ts family.

It localises to the cytoplasm. Its function is as follows. Associates with the EF-Tu.GDP complex and induces the exchange of GDP to GTP. It remains bound to the aminoacyl-tRNA.EF-Tu.GTP complex up to the GTP hydrolysis stage on the ribosome. This is Elongation factor Ts from Bacillus velezensis (strain DSM 23117 / BGSC 10A6 / LMG 26770 / FZB42) (Bacillus amyloliquefaciens subsp. plantarum).